The primary structure comprises 220 residues: Putative NAD(P)H nitroreductase (220 aa).

Residue 155–160 participates in NAD(+) binding; the sequence is GASALG.

Belongs to the nitroreductase family. It depends on FMN as a cofactor.

This chain is Putative NAD(P)H nitroreductase, found in Haemophilus influenzae (strain ATCC 51907 / DSM 11121 / KW20 / Rd).